We begin with the raw amino-acid sequence, 246 residues long: MSFPYFISPEQAMRERSELARKGIARGRSVVALAYSEGVLFVAENPSRSLQKVSELYDRVGFAAVGRFNEFDNLRRGGIQFADTRGYAYDRRDVTGRQLANVYAQTLGTIFTEQAKPYEVELCVAEVAHYGETKAPELYRITYDGSIADEPHFVVMGGTTEPIIAALNESYTENASLQDAVEIAVKALSASAEGAEPRSLGPSTLEVAILDAGRPRRAFRRITGAALEALLPEQPQQADSGDKPTE.

This sequence belongs to the peptidase T1A family. In terms of assembly, the 20S proteasome core is composed of 14 alpha and 14 beta subunits that assemble into four stacked heptameric rings, resulting in a barrel-shaped structure. The two inner rings, each composed of seven catalytic beta subunits, are sandwiched by two outer rings, each composed of seven alpha subunits. The catalytic chamber with the active sites is on the inside of the barrel. Has a gated structure, the ends of the cylinder being occluded by the N-termini of the alpha-subunits. Is capped by the proteasome-associated ATPase, ARC. Can also interact with the bacterial proteasome activator Bpa through the C-terminal hydrophobic-tyrosine-X motif (HbYX motif) of Bpa; Bpa forms a homooligomeric ring-like structure which stacks co-axially with the proteasomal alpha-rings. Pupylated at an undetermined lysine residue by the prokaryotic ubiquitin-like protein Pup with the help of the ligase PafA, which leads to its degradation by the proteasome and thereby constitutes a negative auto-regulation.

The protein resides in the cytoplasm. Its pathway is protein degradation; proteasomal Pup-dependent pathway. Its activity is regulated as follows. The formation of the proteasomal ATPase ARC-20S proteasome complex, likely via the docking of the C-termini of ARC into the intersubunit pockets in the alpha-rings, may trigger opening of the gate for substrate entry. Interconversion between the open-gate and close-gate conformations leads to a dynamic regulation of the 20S proteasome proteolysis activity. PPS auto-regulates its own activity via pupylation and degradation of its components. Peptidolytic activity is inhibited by N-acetyl-Leu-Leu-norleucinal (Ac-LLnL) in vitro. Its function is as follows. Component of the proteasome core, a large protease complex with broad specificity involved in protein degradation. The M.smegmatis proteasome is able to cleave oligopeptides after hydrophobic residues, thus displaying chymotrypsin-like activity. In complex with the ATPase Mpa, degrades protein targets conjugated to a prokaryotic ubiquitin-like protein (Pup). Identified substrates of the M.smegmatis proteasome are the pupylated SodA and Ino1 proteins. The Pup-proteasome system (PPS) is essential for survival under starvation; PPS likely functions to recycle amino acids under nitrogen starvation, thereby enabling the cell to maintain basal metabolic activities. In Mycolicibacterium smegmatis (strain ATCC 700084 / mc(2)155) (Mycobacterium smegmatis), this protein is Proteasome subunit alpha.